The following is a 187-amino-acid chain: Elongation factor P (187 aa).

It belongs to the elongation factor P family.

The protein localises to the cytoplasm. It functions in the pathway protein biosynthesis; polypeptide chain elongation. Involved in peptide bond synthesis. Stimulates efficient translation and peptide-bond synthesis on native or reconstituted 70S ribosomes in vitro. Probably functions indirectly by altering the affinity of the ribosome for aminoacyl-tRNA, thus increasing their reactivity as acceptors for peptidyl transferase. The protein is Elongation factor P of Corynebacterium aurimucosum (strain ATCC 700975 / DSM 44827 / CIP 107346 / CN-1) (Corynebacterium nigricans).